The following is a 486-amino-acid chain: MARLTEREARRQQQQHPPQQQQPRACPMSGPEPPAQQSDSMKDLDAIKLFVGQIPRNLEEKDLKPLFEQFGKIYELTVLKDRYTGMHKGCAFLTYCARDSAIKAQTALHEQKTLPGMARPIQVKPADSESRGGDRKLFVGMLSKQQSEEEVTSMFQAFGSIEECSVLRGPDGSSKGCAFVKFSSHAEAQAAIQALHGSQTMPGASSSLVVKFADTDKERTLRRMQQMVGQLGIFTPSLALPISPYSAYAQALMQQQTTVLSTSHGSYLSPSVAFPSCHIQQIGAVNLNGLPAAPITPASGLHSPPVIGTAAVPGLVAPLTNGFPGLVPFPSSHPALDTIYTNSIVPYPAQSPALTVESLHPSFTGVQQYSAIYPTAALTPVTHSTPQPPPILQQREGPEGCNLFIYHLPQEFGDNELTQMFLPFGNIISSKVFMDRATNQSKCFGFVSFDNPSSAQTAIQAMNGFQIGMKRLKVQLKRPKDTTQPY.

Residues 1–11 (MARLTEREARR) show a composition bias toward basic and acidic residues. The disordered stretch occupies residues 1-39 (MARLTEREARRQQQQHPPQQQQPRACPMSGPEPPAQQSD). A compositionally biased stretch (low complexity) spans 12–24 (QQQQHPPQQQQPR). RRM domains lie at 47-128 (IKLF…PADS), 135-215 (RKLF…FADT), and 401-479 (CNLF…LKRP).

It belongs to the CELF/BRUNOL family.

The protein localises to the nucleus. Its subcellular location is the cytoplasm. Its function is as follows. RNA-binding protein that may be implicated in the regulation of pre-mRNA alternative splicing. The sequence is that of CUGBP Elav-like family member 5 (celf5) from Xenopus tropicalis (Western clawed frog).